The sequence spans 275 residues: 3-methyl-2-oxobutanoate hydroxymethyltransferase (275 aa).

Mg(2+)-binding residues include Asp49 and Asp88. 3-methyl-2-oxobutanoate-binding positions include 49-50, Asp88, and Lys118; that span reads DS. Glu120 is a Mg(2+) binding site. Glu187 (proton acceptor) is an active-site residue.

The protein belongs to the PanB family. As to quaternary structure, homodecamer; pentamer of dimers. Requires Mg(2+) as cofactor.

It is found in the cytoplasm. The enzyme catalyses 3-methyl-2-oxobutanoate + (6R)-5,10-methylene-5,6,7,8-tetrahydrofolate + H2O = 2-dehydropantoate + (6S)-5,6,7,8-tetrahydrofolate. It participates in cofactor biosynthesis; (R)-pantothenate biosynthesis; (R)-pantoate from 3-methyl-2-oxobutanoate: step 1/2. In terms of biological role, catalyzes the reversible reaction in which hydroxymethyl group from 5,10-methylenetetrahydrofolate is transferred onto alpha-ketoisovalerate to form ketopantoate. This is 3-methyl-2-oxobutanoate hydroxymethyltransferase from Brucella suis (strain ATCC 23445 / NCTC 10510).